Here is a 460-residue protein sequence, read N- to C-terminus: Dynactin subunit 4 (460 aa).

Ala-2 bears the N-acetylalanine mark. Residues 152–172 (QQLAQKEKVERDRKKLARRRN) adopt a coiled-coil conformation. Ser-196 is subject to Phosphoserine. A Glycyl lysine isopeptide (Lys-Gly) (interchain with G-Cter in SUMO2) cross-link involves residue Lys-215. Thr-407 carries the post-translational modification Phosphothreonine.

Belongs to the dynactin subunit 4 family. In terms of assembly, subunit of dynactin, a multiprotein complex part of a tripartite complex with dynein and a adapter, such as BICDL1, BICD2 or HOOK3. The dynactin complex is built around ACTR1A/ACTB filament and consists of an actin-related filament composed of a shoulder domain, a pointed end and a barbed end. Its length is defined by its flexible shoulder domain. The soulder is composed of 2 DCTN1 subunits, 4 DCTN2 and 2 DCTN3. The 4 DCNT2 (via N-terminus) bind the ACTR1A filament and act as molecular rulers to determine the length. The pointed end is important for binding dynein-dynactin cargo adapters. Consists of 4 subunits: ACTR10, DCNT4, DCTN5 and DCTN6. The barbed end is composed of a CAPZA1:CAPZB heterodimers, which binds ACTR1A/ACTB filament and dynactin and stabilizes dynactin. Interacts with ATP7B, but not ATP7A, in a copper-dependent manner. Interacts with ANK2; this interaction is required for localization at costameres. Interacts with N4BP2L1.

It localises to the cytoplasm. It is found in the cytoskeleton. The protein resides in the microtubule organizing center. The protein localises to the centrosome. Its subcellular location is the stress fiber. It localises to the cell cortex. It is found in the myofibril. The protein resides in the sarcomere. Part of the dynactin complex that activates the molecular motor dynein for ultra-processive transport along microtubules. In Pongo abelii (Sumatran orangutan), this protein is Dynactin subunit 4 (DCTN4).